Here is a 500-residue protein sequence, read N- to C-terminus: MQKPSLSQDLIWILKSVQSRRSTKGFLQKHSSLKDGSPNKKSFAQPISSSFLNRISITKIDDVDSLSDNTLYGIGRSINSLARLGIQSVIVPTSNPIGMTSPFKYLENGTVVAKKRKLSIFEELQQQQNRVIRVSEIFSKAGVLTRPSYSSVCQLGPEGPSVENVQGIFQALSSLYTVIVPSSILMPNVIEVPIDGNEVLAGLTYSLHKPNFGFWVDRIVILDKNGGMPCSKRQTGSSHVLINLAQEFDELAKTLPPYHRKNLILVRRCLKMLPDDASALITTPEDAMLTNPVLDKNPLIHNVLTDRSIISCSLPRDRSPITKTTVLRSGVPVYTFLGPKCLTDGSVSWERLWVLINDSFKRTLDMDAYLDRLKNSLAAVIIAGDYLGTAIVTYEQPDGTTNEKVPYLDKLAVSQGAQGSAAISDVMFNVMTDLFPKELIWRSRLTNPVNKWYFERSVGSLKSSKTPWKLFWTGDSHVRNLDRVNQYMSVIDKIQPTWLN.

The N-terminal 19 residues, 1-19 (MQKPSLSQDLIWILKSVQS), are a transit peptide targeting the mitochondrion. Positions 336 to 496 (FLGPKCLTDG…YMSVIDKIQP (161 aa)) constitute an N-acetyltransferase domain.

The protein belongs to the acetyltransferase family.

It is found in the mitochondrion. It carries out the reaction L-glutamate + acetyl-CoA = N-acetyl-L-glutamate + CoA + H(+). The protein operates within amino-acid biosynthesis; L-arginine biosynthesis; N(2)-acetyl-L-ornithine from L-glutamate: step 1/4. Functionally, N-acetylglutamate synthase involved in arginine biosynthesis. This chain is Amino-acid acetyltransferase, mitochondrial (arg6), found in Schizosaccharomyces pombe (strain 972 / ATCC 24843) (Fission yeast).